A 109-amino-acid polypeptide reads, in one-letter code: UPF0060 membrane protein mma_0129 (109 aa).

A run of 4 helical transmembrane segments spans residues Val-7 to Trp-27, Gly-31 to Leu-51, Ala-63 to Ile-83, and Asn-87 to Pro-107.

This sequence belongs to the UPF0060 family.

It localises to the cell inner membrane. The protein is UPF0060 membrane protein mma_0129 of Janthinobacterium sp. (strain Marseille) (Minibacterium massiliensis).